A 473-amino-acid chain; its full sequence is GTPase Der (473 aa).

EngA-type G domains are found at residues 5-170 (PVVA…PEDV) and 178-351 (LKLA…ASSM). GTP is bound by residues 11-18 (GRPNVGKS), 58-62 (DTGGI), 123-126 (NKID), 184-191 (GRPNVGKS), 231-235 (DTAGV), and 296-299 (NKWD). The region spanning 352-436 (FKVSTNRLTQ…PLKVEFKLNT (85 aa)) is the KH-like domain. The segment at 438-473 (PYAGKKTTSSKKLRPGVSEARQKRRNMKYKKGSHKK) is disordered. The span at 459-473 (QKRRNMKYKKGSHKK) shows a compositional bias: basic residues.

It belongs to the TRAFAC class TrmE-Era-EngA-EngB-Septin-like GTPase superfamily. EngA (Der) GTPase family. In terms of assembly, associates with the 50S ribosomal subunit.

Its function is as follows. GTPase that plays an essential role in the late steps of ribosome biogenesis. In Psychrobacter sp. (strain PRwf-1), this protein is GTPase Der.